The sequence spans 273 residues: Probable branched-chain-amino-acid aminotransferase (273 aa).

K133 is subject to N6-(pyridoxal phosphate)lysine.

Belongs to the class-IV pyridoxal-phosphate-dependent aminotransferase family. Pyridoxal 5'-phosphate serves as cofactor.

It carries out the reaction L-leucine + 2-oxoglutarate = 4-methyl-2-oxopentanoate + L-glutamate. It catalyses the reaction L-isoleucine + 2-oxoglutarate = (S)-3-methyl-2-oxopentanoate + L-glutamate. The catalysed reaction is L-valine + 2-oxoglutarate = 3-methyl-2-oxobutanoate + L-glutamate. Its pathway is amino-acid biosynthesis; L-isoleucine biosynthesis; L-isoleucine from 2-oxobutanoate: step 4/4. It participates in amino-acid biosynthesis; L-leucine biosynthesis; L-leucine from 3-methyl-2-oxobutanoate: step 4/4. It functions in the pathway amino-acid biosynthesis; L-valine biosynthesis; L-valine from pyruvate: step 4/4. Acts on leucine, isoleucine and valine. The chain is Probable branched-chain-amino-acid aminotransferase (ilvE) from Thermotoga maritima (strain ATCC 43589 / DSM 3109 / JCM 10099 / NBRC 100826 / MSB8).